The sequence spans 163 residues: HTH-type transcriptional regulator IscR (163 aa).

Residues 2 to 131 enclose the HTH rrf2-type domain; it reads RLTSKGRYAV…NNITLGELVN (130 aa). The segment at residues 28–51 is a DNA-binding region (H-T-H motif); sequence LADISERQGISLSYLEQLFSRLRK. Cysteine 92, cysteine 98, and cysteine 104 together coordinate [2Fe-2S] cluster. A compositionally biased stretch (basic and acidic residues) spans 140 to 149; the sequence is DRQHTHDAPR. Residues 140–163 form a disordered region; it reads DRQHTHDAPRSTRTQDAIDVKLRA.

[2Fe-2S] cluster is required as a cofactor.

In terms of biological role, regulates the transcription of several operons and genes involved in the biogenesis of Fe-S clusters and Fe-S-containing proteins. This is HTH-type transcriptional regulator IscR from Citrobacter koseri (strain ATCC BAA-895 / CDC 4225-83 / SGSC4696).